Here is a 139-residue protein sequence, read N- to C-terminus: Large ribosomal subunit protein bL17 (139 aa).

Belongs to the bacterial ribosomal protein bL17 family. In terms of assembly, part of the 50S ribosomal subunit. Contacts protein L32.

This is Large ribosomal subunit protein bL17 from Sphingopyxis alaskensis (strain DSM 13593 / LMG 18877 / RB2256) (Sphingomonas alaskensis).